The following is a 91-amino-acid chain: Small ribosomal subunit protein uS19 (91 aa).

Belongs to the universal ribosomal protein uS19 family.

Protein S19 forms a complex with S13 that binds strongly to the 16S ribosomal RNA. This Dechloromonas aromatica (strain RCB) protein is Small ribosomal subunit protein uS19.